A 265-amino-acid chain; its full sequence is Gap junction beta-4 protein (265 aa).

The stretch at 2-13 (NWGFLQGILSGV) is an intramembrane region. The Cytoplasmic segment spans residues 14-20 (NKYSTAL). The helical transmembrane segment at 21 to 40 (GRIWLSVVFIFRVLVYVVAA) threads the bilayer. The Extracellular segment spans residues 41 to 73 (EEVWDDEQKDFICNTKQPGCPNVCYDEFFPVSH). 3 disulfide bridges follow: Cys53–Cys175, Cys60–Cys169, and Cys64–Cys164. A helical transmembrane segment spans residues 74–94 (VRLWALQLILVTCPSLLVVMH). Topologically, residues 95-130 (VAYREERERKHRLKHGPDAPALYSNLSKKRGGLWWT) are cytoplasmic. The chain crosses the membrane as a helical span at residues 131-151 (YLLSLIFKAAVDSGFLYIFHC). The Extracellular portion of the chain corresponds to 152–184 (IYKDYDMPRVVACSVQPCPHTVDCYISRPTEKK). The helical transmembrane segment at 185 to 205 (VFTYFMVVTAAICILLNLSEV) threads the bilayer. The Cytoplasmic segment spans residues 206-265 (AYLVGKRCMEVFRPRRQKTSRRHQLPDTCPPYVISKGHPQDESTVLTKAGMATVDAGVYP).

The protein belongs to the connexin family. Beta-type (group I) subfamily. In terms of assembly, a hemichannel or connexon is composed of a hexamer of connexins. A functional gap junction is formed by the apposition of two hemichannels. Forms heteromeric channels with GJB2. Detected in adult heart, kidney, skin and cochlea, where it is detected in spiral ganglion, stria vascularis, spiral limbus and spiral ligament (at protein level).

Its subcellular location is the cell membrane. The protein resides in the cell junction. It localises to the gap junction. Structural component of gap junctions. Gap junctions are dodecameric channels that connect the cytoplasm of adjoining cells. They are formed by the docking of two hexameric hemichannels, one from each cell membrane. Small molecules and ions diffuse from one cell to a neighboring cell via the central pore. This chain is Gap junction beta-4 protein (Gjb4), found in Rattus norvegicus (Rat).